Here is a 66-residue protein sequence, read N- to C-terminus: DNA gyrase inhibitor YacG (66 aa).

Cys-9, Cys-12, Cys-28, and Cys-32 together coordinate Zn(2+).

Belongs to the DNA gyrase inhibitor YacG family. Interacts with GyrB. Zn(2+) is required as a cofactor.

In terms of biological role, inhibits all the catalytic activities of DNA gyrase by preventing its interaction with DNA. Acts by binding directly to the C-terminal domain of GyrB, which probably disrupts DNA binding by the gyrase. This chain is DNA gyrase inhibitor YacG, found in Pseudomonas fluorescens (strain Pf0-1).